We begin with the raw amino-acid sequence, 428 residues long: Adenylosuccinate synthetase 1 (428 aa).

GTP contacts are provided by residues Gly12–Lys18 and Gly40–Thr42. The Proton acceptor role is filled by Asp13. Mg(2+) contacts are provided by Asp13 and Gly40. Residues Asp13–Lys16, Asn38–His41, Thr133, Arg147, Asn224, Thr239, and Arg303 each bind IMP. The active-site Proton donor is the His41. A substrate-binding site is contributed by Thr299 to Arg305. GTP is bound by residues Arg305, Lys331 to Asp333, and Gly413 to Gly415.

Belongs to the adenylosuccinate synthetase family. In terms of assembly, homodimer. Mg(2+) serves as cofactor.

It is found in the cytoplasm. The catalysed reaction is IMP + L-aspartate + GTP = N(6)-(1,2-dicarboxyethyl)-AMP + GDP + phosphate + 2 H(+). It functions in the pathway purine metabolism; AMP biosynthesis via de novo pathway; AMP from IMP: step 1/2. Its function is as follows. Plays an important role in the de novo pathway and in the salvage pathway of purine nucleotide biosynthesis. Catalyzes the first committed step in the biosynthesis of AMP from IMP. This is Adenylosuccinate synthetase 1 from Laccaria bicolor (strain S238N-H82 / ATCC MYA-4686) (Bicoloured deceiver).